Reading from the N-terminus, the 39-residue chain is U1-nemetoxin-Csp1c (39 aa).

Intrachain disulfides connect Cys1–Cys15, Cys8–Cys19, Cys14–Cys36, and Cys25–Cys32.

As to expression, expressed by the venom gland.

Its subcellular location is the secreted. Functionally, causes paralysis to insect larvae (H.virescens). This toxin is active only on insects. This chain is U1-nemetoxin-Csp1c, found in Calisoga sp. (Spider).